The primary structure comprises 150 residues: UPF0208 membrane protein VP2081 (150 aa).

A run of 2 helical transmembrane segments spans residues F42–N62 and S70–A90.

The protein belongs to the UPF0208 family.

It is found in the cell inner membrane. The chain is UPF0208 membrane protein VP2081 from Vibrio parahaemolyticus serotype O3:K6 (strain RIMD 2210633).